A 396-amino-acid polypeptide reads, in one-letter code: Elongation factor Tu (396 aa).

Residues K10–E206 form the tr-type G domain. The tract at residues G19–T26 is G1. G19–T26 contributes to the GTP binding site. Residue T26 coordinates Mg(2+). The segment at G60 to N64 is G2. Positions D81–G84 are G3. GTP is bound by residues D81–H85 and N136–D139. The G4 stretch occupies residues N136–D139. Positions S174–L176 are G5.

Belongs to the TRAFAC class translation factor GTPase superfamily. Classic translation factor GTPase family. EF-Tu/EF-1A subfamily. In terms of assembly, monomer.

The protein localises to the cytoplasm. It catalyses the reaction GTP + H2O = GDP + phosphate + H(+). Functionally, GTP hydrolase that promotes the GTP-dependent binding of aminoacyl-tRNA to the A-site of ribosomes during protein biosynthesis. This is Elongation factor Tu from Acinetobacter baylyi (strain ATCC 33305 / BD413 / ADP1).